Here is a 703-residue protein sequence, read N- to C-terminus: Lactococcin-G-processing and transport ATP-binding protein LagD (703 aa).

The Peptidase C39 domain maps to 7 to 132 (QQDEKDCGVA…KEWTGVLLFP (126 aa)). Residue C13 is part of the active site. Residues 153–435 (PILIKQKSLF…IINLQVKMQK (283 aa)) enclose the ABC transmembrane type-1 domain. Helical transmembrane passes span 162–182 (FITIFGIISSYYFQGLLDNII), 189–209 (TLNILSIGLIFVYLFRVLFEY), 224–244 (MSIMLGYFKHVLSLPLSFFAT), 267–287 (ATLSLILDIGMVILVGTTLAI), 291–311 (QLFLLTLAFLPFYILVVYVFI), 381–401 (MVIELISSVLILWLGSSYVID), and 409–429 (LITYNALLVFFTEPLQNIINL). In terms of domain architecture, ABC transporter spans 469 to 703 (IKLDKVSFSY…EGVYRRLLNA (235 aa)). ATP is bound at residue 502–509 (GVSGSGKS).

It belongs to the ABC transporter superfamily. LagD family. In terms of assembly, homodimer.

It localises to the cell membrane. In terms of biological role, lagD (TC 3.A.1) is involved in processing the signal peptide and probably also in export of the bacteriocin lactococcin G. This is Lactococcin-G-processing and transport ATP-binding protein LagD (lagD) from Lactococcus lactis subsp. lactis (Streptococcus lactis).